The primary structure comprises 636 residues: Nucleolar protein 9 (636 aa).

A disordered region spans residues Met1–Pro59. A Phosphoserine modification is found at Ser7. Basic and acidic residues predominate over residues Gly45–Leu57. 2 Pumilio repeats span residues Glu92–Cys123 and Glu189–Arg223. The segment at Glu222–Glu241 is disordered. Positions Gly228–Pro238 are enriched in polar residues. 4 Pumilio repeats span residues Ser313–Phe348, His351–Phe386, Leu509–Val544, and Asn547–Ala581.

It belongs to the NOP9 family.

This Homo sapiens (Human) protein is Nucleolar protein 9 (NOP9).